The primary structure comprises 101 residues: Small integral membrane protein 14 (101 aa).

A compositionally biased stretch (basic and acidic residues) spans 71–81; that stretch reads SDRRTADDAAI. The tract at residues 71-101 is disordered; sequence SDRRTADDAAIEKPTGSSDDNTPPPPPPSAM. The span at 92–101 shows a compositional bias: pro residues; that stretch reads TPPPPPPSAM.

This Caenorhabditis elegans protein is Small integral membrane protein 14.